The sequence spans 4262 residues: MITEQLHISLNNPIMSNHKVYGQALLPGLAYIDLIYQVFQEHGYAYQELELKNLTIFYPLIADESYDIALTIHVSERKEGTWSIIIDGQKQHGESLSDKRQYVTADMHRKEQTAFAESIDLNQWKSTADRILNLDEIYEQCRSQELVHTGMMKAEGQIYEAKEGAVIDLAVGQEALRHSDAFLFHPTLIDGSGIGSSCLISDQTMYLPLYYESFSASERLQKGCTARILSSSVRQKKELTYMTIEYFNSAGQKVAELKQFAGKSVRNMSAFHSAKEIQEERAAVSQNISRDYPAFEMYLRQLLAKQLERPAEQMDIHAGYYELGLDSSSLLTVVQEIGDKVGADLAPTLLFEFTTIAELAAHLADHYSIGEADDAVRQSPSPIDGVTSSPEIGEDIAIIGMAGRYPKAKNIQEFWEQLKAGTDCITEIPNSRWEWKESDGLDSPAGKPLSKWGGFIEEADCFDPQFFRISPREAEMMDPQERLFLETCWEAIEDAGYTPETIASPQGENKRQHVGVFAGVMHKDYSLIGAEALSEHNPFPLSLNYAQIANRVSYYCNFHGPSMAVDTVCSSSLTAVHLAIESIRNGECEAALAGGVNLSLHPAKYISYGSVGMHSSDGYCHTFGKGGDGYVSGEGVGTVLLKPLRKAEQDGDRIYAVIKGSAINHVGKVSGITVPSPVAQADVIEACLEKTGIDPRTISYVEAHGTGTSLGDPIEVQGLVKAFSRNTQDKQFCSIGSVKSNIGHAEAAAGISGLTKTVLQLHHKTLVPSLHSEELNPYLKLDQTPFFVQHETKEWEQPSFTENGVDVTYPRRAGLSSFGASGSNAHLILEEYIPAESHSETILTKNEEIVIPLSARNKDRLQAYALKLLDFLSEDVNLLALAYTMQAGRVEMEERAAFIVKDIKDLTAKLRAFANGEEEIEGCWTGRAKENQEAAGLASVNALNNNLIRDSEMMEMAKAWVQGKRVTWDDLYGDRKPLKISVPTYPFARERYWISVPEMKTSTVNHILHPLVHRNTSDFTEQRFSSVFTGTEFFLSDHVVQGQKILPGVAYLEMAREAAEKAAGDLDGEQRVVSLKDIVWVRPITIESEPKEIHIGLFPEDNGDISFDIYSSSEHKEEALTIHCQGRAVISDEAETSILNLSSIQTECSLDTVTSEQCYAAFRKIGLDYGEGYQGIEKVYVGKDQLLAKISLPAFLKNDKQHFALHPSLMDSAFHATVGFIVSSVNAAGQAQTLSLPFALQEVDIFSPCPEKIWSYIRYSSDSKAENKVRKYDIDLCDENGRVCVRMKGASMRALDGEQHSKPQLLTDSQLTGHTVMIPVWEPVSLEAEDNASFAGKRAVLCGAAEADRTFIKHHYPQISFVDIRPADDIEAIADKLQAYGSIDHVLWIAPSHRGSIGSDGQEEAVLHLFKLVKACLQLGYGEKQLEWSLVTVQAQPVTQHEAVQPAHASIHGLAGTMAKEYPHWKIRLLDLEKGCTWPVNHMFALPADRLGHAWAYRNQQWHQQQLIPYRSSLSGDTLYRKGGVYVVIGGAGYIGEAWSEYMIRRYQAQIVWIGRSQLNAAIQSKIDRLSALGPEPFYIAADAADKHSLQQAYEQVKKRHPHIHGIVHSAMVLFEQSLEKMKPEEFTAGLAAKIDVSIRMAQVFRQENVDFVLFFSSLVAHIKNVKQSHYASGCTFADAFAHQLSQSWACPVKVMNWGYWGNSEAAEDEHYVQLMNQIGLGLIEPAEAMKALEALLSGPVSQTAFIHTTKPVAVEGVNQNEFITLYPEQPSADAESLMERLPTTGRFQRVTHEELDDLLYRLLLGQLQTAELFDGYTLSVERLQQYKTREFYGKWIRQSSEFLLQHGYLKKVGDSLVRKDQAEDIELLWLEWNAKKEKWLKDSETKAMVVLAEAMLQALPDILTGKVPATDIMFPHSSMELVEGIYKHNQVADYFNKVLADTLLAYLDERLKHDPEASIRIMEIGAGTGGTSAGIFEKLKPYQKHINEYCYTDLSKAFLLHAEKEYGAENPYLTYQLFDVEKPIDQQEFEAGGYDVVIAANVLHATKNIRQTLRHTKAVMKNNGMLLLNEMAGNSLFPHITFGLLEGWWLYEDPAVRIPGCPGLHPDSWKAALESEGFESVFFPAEAAHDLSHQIVAASSNGLVRRMMKNVILPEKVVSQASNQEPAYIHTIDSEEAGQSKHALLREKSTEYMKKLIGETLKIPAGKIESSEPLEKYGIDSIVVVQLTNTLRKEFDHVSSTLFFEYQTIDALVEHFIKTKTEALMKLTGLDRQVQQHTPAESRTQSSQKPDQAAKRTRRFRKLGFSGEKETPTNTLASRDVAVIGISGRYPQAETAEDFWNNLKEGRNCIEEIPKDRWDWKAYYDKEKGKEGSIYTKWGGFIKDMDKFDPLFFQISPLEAERMDPQERLFLQTAYASIEDAGYTPDSLCSSRKIGVFAGVMNKNYPTGYGYWSIANRISYLLNFQGPSLAVDTACSSSLTAIHLALESIYSGSSDCAIAGGVNLVVDPVHYQNLSVMNMLSASDTCKSFGDDADGFVDGEGVGAIVLKPLQQAIADGDHIYGVIKASAINSGGKTNGYTVPNPHAQAQVIKEAIERADIPARTISYLEAHGTGTALGDPIEIAGLTKAFEKDTQEKQFCAIGSSKSNIGHCESAAGIAGLTKILFQFKYGQIAPSLHAQRLNPNIEFSHTPFVVQQQLGEWKRPVIGGQEVPRRAGLSSFGAGGSNAHIILEEYIPRTGAQTPKDHPPALIVLSAKNMERLQEKAEQLLTAIKQKRYCETDLIRIAYTLQTGREAMEERLAFIAESLEDLERKLNDFIENKADSLYLDRIDDNKKALAVLSADEDTEKIIEAWMSKGKYTKLLDLWVKGLSFDWGMLYGTQTPVRISLPAYPFAKERYWAPGAAKAPVSIEQDHDQQTEEPFKVMTFQEVWKEEPATLTSKRIKTLICFLTEREKQNAFASALKNVDQDTKVIFISQGEVYSKQSEYSYQIVRQEPVTFEKAFQSIKEELGEPDAILYMWPMEDKRCIKDHSCIVYLLQGMSAAKLHPSRLLLAGCFEDSLDRSYLESWIGFERSLGLVLPHTKVTGIFQPAEQGSMDDWTRKVWAELQASTEQTVLYQNLKRYVNHIEQTTIQPDNSKLKSGGTYLITGGVGGLGYLFAKHLAKNYAANLILTGRSPFNDEKQKQIKELKDLGGEAMYAEADVSDPIAMGDCVKRGKDRFGAINGVIHAAGIESDSAIFDKKIESFQRIIEPKINGTIALDEWLKNEDLDFMCYFSSSSAVLGDFGCCDYAIGNRFQMAYAQYRNELHNGKTFVINWPVWKDGGMKIGDEETTDMYLKSSGQRFLEAEEGIRMFEHILAQQDAQHLVIAGQPSRVSRFLGMTEPAIPEPATQAPLAQENKDEVKTLSIEKRLEHDLKEHIHTLLKISKDKLNLNKNWADFGFDSIYLAKFSNVLSKHFNIEVTPALFFGYSTLQELISFFLTDHKELIEAFYRDDASEAQKPPEAYAVIPVALEPEASKKSIRQVHDEPIAIIGMSGRFPQADSVHELWDNLKNGKSCISDIPGERRDWGRANRDPEKAVPRWGAFLKDIDRFDPLFFQISPKEAESMDPRQRIFLEEAWHTFEDAGYMGDRIKGKSCGVYVGVEEGEYAHLTGDTDYINGTQNATLSARIAYALDLKGPNMALTAACSSGLVAIHQACSALRQGDCEMALAGGVSLNISHMSFEALTRAEMLSPNGQCKVFDQDANGLVPGEAVAAVLLKPLSKAIEDKDHIYGCIKASGVNYDGKTNGITAPNPFSQAELIENIYEKNEINPLDIQYVMAHSTGSNLGDPLEVQALTSVFSKYTKQKQFCMISSIKPLIGHTFAASGTVALISMLMAMKNQIIPATHHCESENPYIPFKESPFVLCKENRSWIKKNQKPRMGTISTTGISGTNAHAVIEEYIPDDQPSTQRHQGSPQIFVISAQNDDRLQDAACRMIAYLEQNHNLSLPDVAYTLQVGRKAMEARLAIVANNQEQLVRKLKEYVEAMKNGGVSGQQRSLYTGYTEGILEEQDEAVLQALAKERNLENIAECWVKGYQIPWELLHDGDDVRMVSLPGYPFARERYWISSGTQQSEAVKQHSQDMKTEIDEPNGKTHIQKIIVQFLARELGISEDRINFKRNFLDYGMDSILGRKLMRHIEKTTQLKMAGREILECQTVQALSDHLALKAEKQNHSAAAHHIKGTYTDEQIIGLMQEVALGKLDFKSVQNIIEGSKSYES.

The interval 1-114 is N-terminal hotdog fold 1; the sequence is MITEQLHISL…ADMHRKEQTA (114 aa). One can recognise a PKS/mFAS DH 1 domain in the interval 1 to 271; sequence MITEQLHISL…GKSVRNMSAF (271 aa). Catalysis depends on histidine 18, which acts as the Proton acceptor; for dehydratase activity 1. The tract at residues 129 to 271 is C-terminal hotdog fold 1; it reads DRILNLDEIY…GKSVRNMSAF (143 aa). The Proton donor; for dehydratase activity 1 role is filled by aspartate 190. The region spanning 293-367 is the Carrier 1 domain; it reads PAFEMYLRQL…ELAAHLADHY (75 aa). An O-(pantetheine 4'-phosphoryl)serine modification is found at serine 327. Residues 393-831 enclose the Ketosynthase family 3 (KS3) 1 domain; it reads GEDIAIIGMA…GSNAHLILEE (439 aa). Residues cysteine 569, histidine 704, and histidine 744 each act as for beta-ketoacyl synthase 1 activity in the active site. The tract at residues 1009–1135 is N-terminal hotdog fold 2; sequence HPLVHRNTSD…GRAVISDEAE (127 aa). In terms of domain architecture, PKS/mFAS DH 2 spans 1009–1301; that stretch reads HPLVHRNTSD…MRALDGEQHS (293 aa). Residue histidine 1038 is the Proton acceptor; for dehydratase activity 2 of the active site. The tract at residues 1149–1301 is C-terminal hotdog fold 2; sequence SLDTVTSEQC…MRALDGEQHS (153 aa). Catalysis depends on aspartate 1211, which acts as the Proton donor; for dehydratase activity 2. The Carrier 2 domain occupies 2188–2261; that stretch reads EKSTEYMKKL…ALVEHFIKTK (74 aa). Serine 2222 bears the O-(pantetheine 4'-phosphoryl)serine mark. Positions 2275 to 2291 are enriched in polar residues; that stretch reads VQQHTPAESRTQSSQKP. Residues 2275–2313 form a disordered region; the sequence is VQQHTPAESRTQSSQKPDQAAKRTRRFRKLGFSGEKETP. In terms of domain architecture, Ketosynthase family 3 (KS3) 2 spans 2319–2734; sequence SRDVAVIGIS…GSNAHIILEE (416 aa). Active-site for beta-ketoacyl synthase 2 activity residues include cysteine 2476, histidine 2611, and histidine 2651. Residues 2750–2826 adopt a coiled-coil conformation; sequence ALIVLSAKNM…DFIENKADSL (77 aa). The Carrier 3 domain maps to 3409–3486; sequence SIEKRLEHDL…ELISFFLTDH (78 aa). Serine 3446 is subject to O-(pantetheine 4'-phosphoryl)serine. A Ketosynthase family 3 (KS3) 3 domain is found at 3529–3944; sequence DEPIAIIGMS…GTNAHAVIEE (416 aa). Residues cysteine 3690, histidine 3825, and histidine 3865 each act as for beta-ketoacyl synthase 3 activity in the active site. Positions 4004–4033 form a coiled coil; that stretch reads KAMEARLAIVANNQEQLVRKLKEYVEAMKN. The region spanning 4135 to 4212 is the Carrier 4 domain; it reads NGKTHIQKII…ALSDHLALKA (78 aa). The residue at position 4172 (serine 4172) is an O-(pantetheine 4'-phosphoryl)serine.

Pantetheine 4'-phosphate is required as a cofactor.

It is found in the cytoplasm. Its pathway is antibiotic biosynthesis; bacillaene biosynthesis. Functionally, involved in some intermediate steps for the synthesis of the antibiotic polyketide bacillaene which is involved in secondary metabolism. The sequence is that of Polyketide synthase PksM (pksM) from Bacillus subtilis (strain 168).